The sequence spans 166 residues: UPF0336 protein MT0525.1 (166 aa).

Positions 8-131 (QTLIGKHYRA…VLAEIRSEVT (124 aa)) constitute a MaoC-like domain.

This sequence belongs to the UPF0336 family.

In Mycobacterium tuberculosis (strain CDC 1551 / Oshkosh), this protein is UPF0336 protein MT0525.1.